Consider the following 591-residue polypeptide: Transcription factor COE1 (591 aa).

M1 carries the post-translational modification N-acetylmethionine. Residues 1–14 (MFGIQESIQRSGSS) are compositionally biased toward polar residues. The interval 1–21 (MFGIQESIQRSGSSMKEEPLG) is disordered. K16 participates in a covalent cross-link: Glycyl lysine isopeptide (Lys-Gly) (interchain with G-Cter in SUMO1); alternate. K16 is covalently cross-linked (Glycyl lysine isopeptide (Lys-Gly) (interchain with G-Cter in SUMO2); alternate). The interaction with DNA stretch occupies residues 63–66 (RKSN). The segment at 151-170 (CRVLLTHEIMCSRCCDKKSC) adopts a C5-type zinc-finger fold. Interaction with DNA regions lie at residues 197-204 (NCLKNAGN) and 236-239 (NNSK). An IPT/TIG domain is found at 262-345 (PCIKAISPSE…KGTPGRFIYT (84 aa)). The interval 457-480 (GFTRNSSSVSPHGYVPSTTPQQTN) is disordered.

This sequence belongs to the COE family. Homodimer. Interacts with ZNF423 and ZNF521, leading to prevent EBF1 to bind DNA and activate target genes. Interacts with CCR4-NOT component CNOT3. In terms of assembly, (Microbial infection) Interacts with Epstein-barr virus protein EBNA2.

The protein resides in the nucleus. Its function is as follows. Key pioneer transcription factor of B-cell specification and commitment. Recognizes variations of the palindromic sequence 5'-ATTCCCNNGGGAATT-3'. Operates in a transcription factor network to activate B-cell-specific genes and repress genes associated with alternative cell fates. For instance, positively regulates many B-cell specific genes including BCR or CD40 while repressing genes that direct cells into alternative lineages, including GATA3 and TCF7 for the T-cell lineage. In addition to its role during lymphopoiesis, controls the thermogenic gene program in adipocytes during development and in response to environmental cold. (Microbial infection) Acts as a chromatin anchor for Epstein-Barr virus EBNA2 to mediate the assembly of EBNA2 chromatin complexes in B-cells. In addition, binds to the viral LMP1 proximal promoter and promotes its expression during latency. The chain is Transcription factor COE1 (EBF1) from Homo sapiens (Human).